Consider the following 325-residue polypeptide: Malate dehydrogenase (325 aa).

Residue 11–17 (GAAGHVS) participates in NAD(+) binding. Arg-92 and Arg-98 together coordinate substrate. Residues Asn-105, Gln-112, and 129 to 131 (VGN) each bind NAD(+). Positions 131 and 162 each coordinate substrate. His-187 acts as the Proton acceptor in catalysis.

It belongs to the LDH/MDH superfamily. MDH type 2 family.

The enzyme catalyses (S)-malate + NAD(+) = oxaloacetate + NADH + H(+). Functionally, catalyzes the reversible oxidation of malate to oxaloacetate. This is Malate dehydrogenase from Desulfotalea psychrophila (strain LSv54 / DSM 12343).